The following is a 591-amino-acid chain: CTP synthase 1 (591 aa).

K100 carries the N6-acetyllysine modification. Positions 300-554 constitute a Glutamine amidotransferase type-1 domain; the sequence is SIALVGKYTK…LASVGRLSHY (255 aa). Residues C399, H526, and E528 each act as for GATase activity in the active site. Phosphoserine is present on residues S562, S568, S571, S573, S574, S575, S578, and S587. The tract at residues 562–591 is disordered; sequence SPRDTYSDRSGSSSPDSEITELKFPSINHD. The span at 569–578 shows a compositional bias: low complexity; sequence DRSGSSSPDS.

It belongs to the CTP synthase family. In terms of tissue distribution, widely expressed.

The protein resides in the cytoplasm. It is found in the cytosol. It carries out the reaction UTP + L-glutamine + ATP + H2O = CTP + L-glutamate + ADP + phosphate + 2 H(+). The protein operates within pyrimidine metabolism; CTP biosynthesis via de novo pathway; CTP from UDP: step 2/2. Activated by GTP and inhibited by CTP. In terms of biological role, this enzyme is involved in the de novo synthesis of CTP, a precursor of DNA, RNA and phospholipids. Catalyzes the ATP-dependent amination of UTP to CTP with either L-glutamine or ammonia as a source of nitrogen. This enzyme and its product, CTP, play a crucial role in the proliferation of activated lymphocytes and therefore in immunity. The protein is CTP synthase 1 of Homo sapiens (Human).